The primary structure comprises 177 residues: MSLIKIIAITGMPGSGKGELAKLLREKGIKVITMSDVLREKYYKEAKEGERLMDFAKRIRELYGKGAVAKLCIEKIGKEEIVAFDGVRNWEEIEEFKKIGNVTIIAVHSPPKLRYERLLKRGRKDDTLTVEGLMKRDWEELEMGIGNVIALADYILINDSTIEEFKSKAEELLKRIL.

Glycine 11 to glycine 18 provides a ligand contact to ATP.

It belongs to the UPF0200 family.

The polypeptide is UPF0200 protein STK_09500 (Sulfurisphaera tokodaii (strain DSM 16993 / JCM 10545 / NBRC 100140 / 7) (Sulfolobus tokodaii)).